The chain runs to 333 residues: T-cell surface glycoprotein CD1b-1 (333 aa).

The N-terminal stretch at M1 to N18 is a signal peptide. Topologically, residues E19–G302 are extracellular. N38, N75, N146, and N258 each carry an N-linked (GlcNAc...) asparagine glycan. Cystine bridges form between C120–C184 and C224–C279. An Ig-like domain is found at P185 to W295. The helical transmembrane segment at L303 to F323 threads the bilayer. The Cytoplasmic segment spans residues W324 to L333. The Internalization signal signature appears at Y329 to I332.

Heterodimer with B2M (beta-2-microglobulin). Interacts with saposin C.

It is found in the cell membrane. It localises to the endosome membrane. The protein resides in the lysosome membrane. Antigen-presenting protein that binds self and non-self lipid and glycolipid antigens and presents them to T-cell receptors on natural killer T-cells. The polypeptide is T-cell surface glycoprotein CD1b-1 (Ovis aries (Sheep)).